A 392-amino-acid polypeptide reads, in one-letter code: Chorismate synthase (392 aa).

The NADP(+) site is built by arginine 40 and arginine 46. FMN is bound by residues 135-137 (RAS), 256-257 (QA), glycine 300, 315-319 (KPIST), and arginine 341.

It belongs to the chorismate synthase family. Homotetramer. FMNH2 serves as cofactor.

The enzyme catalyses 5-O-(1-carboxyvinyl)-3-phosphoshikimate = chorismate + phosphate. The protein operates within metabolic intermediate biosynthesis; chorismate biosynthesis; chorismate from D-erythrose 4-phosphate and phosphoenolpyruvate: step 7/7. Its function is as follows. Catalyzes the anti-1,4-elimination of the C-3 phosphate and the C-6 proR hydrogen from 5-enolpyruvylshikimate-3-phosphate (EPSP) to yield chorismate, which is the branch point compound that serves as the starting substrate for the three terminal pathways of aromatic amino acid biosynthesis. This reaction introduces a second double bond into the aromatic ring system. The chain is Chorismate synthase from Acidothermus cellulolyticus (strain ATCC 43068 / DSM 8971 / 11B).